A 1338-amino-acid chain; its full sequence is Insulin receptor substrate 2 (1338 aa).

A compositionally biased stretch (pro residues) spans 1–12 (MASPPRHGPPGP). Disordered stretches follow at residues 1-31 (MASP…NHSV) and 49-72 (VLRG…QPPR). The PH domain occupies 16-144 (DGPNLNNNNN…WYRALTDLVS (129 aa)). The span at 19-28 (NLNNNNNNNN) shows a compositional bias: low complexity. Positions 53–66 (PGAGGDEATAGGGS) are enriched in gly residues. In terms of domain architecture, IRS-type PTB spans 194–298 (YREVWQVNLK…EAMKALKELF (105 aa)). The disordered stretch occupies residues 303-411 (RSKSQSSGSS…SHTLSGGCGG (109 aa)). Ser-306 and Ser-346 each carry phosphoserine. Thr-350 carries the phosphothreonine modification. Phosphoserine is present on residues Ser-365, Ser-384, Ser-388, and Ser-391. Arg-412 is modified (omega-N-methylarginine). The tract at residues 428–537 (SRSMSMPVAH…PPARDGGGGG (110 aa)) is disordered. Low complexity predominate over residues 444 to 453 (SPGSLSSSSG). Residues 459–471 (YPPPPGPHPPLPH) show a composition bias toward pro residues. The segment covering 475–493 (HGPGQRPSSGSASASGSPS) has biased composition (low complexity). Position 520 is a phosphothreonine (Thr-520). Phosphoserine is present on Ser-523. The residue at position 527 (Thr-527) is a Phosphothreonine. Tyr-540 bears the Phosphotyrosine; by INSR mark. The YXXM motif 1 signature appears at 540–543 (YGYM). Ser-560 carries the phosphoserine; by PLK1 modification. At Ser-577 the chain carries Phosphoserine. Phosphothreonine occurs at positions 579 and 580. Ser-594 carries the phosphoserine modification. The YXXM motif 2 signature appears at 598–601 (YTLM). Residues Ser-608 and Ser-620 each carry the phosphoserine modification. Phosphotyrosine; by INSR occurs at positions 653 and 675. Short sequence motifs (YXXM motif) lie at residues 653–656 (YMPM) and 675–678 (YMPM). Residues Ser-679 and Ser-682 each carry the phosphoserine modification. The segment covering 703–719 (PSAGPAGPAPTSAAGRT) has biased composition (low complexity). Positions 703–739 (PSAGPAGPAPTSAAGRTFPASGGGYKASSPAESSPED) are disordered. Phosphoserine occurs at positions 735 and 736. A YXXM motif 5 motif is present at residues 742-745 (YMRM). Residue Ser-770 is modified to Phosphoserine. Thr-779 is modified (phosphothreonine). Position 805 is a phosphoserine (Ser-805). Positions 823–826 (YVLM) match the YXXM motif 6 motif. Residue Ser-828 is modified to Phosphoserine. The segment at 840–1101 (EPQATPGPSQ…KPEAARVASP (262 aa)) is disordered. Pro residues predominate over residues 859–870 (TQPPHPVVPSPV). Residue Ser-915 is modified to Phosphoserine. The residue at position 919 (Tyr-919) is a Phosphotyrosine; by INSR. Over residues 938 to 967 (LLASAASSSSLLSASSPASSLGSGTPGTSS) the composition is skewed to low complexity. A Phosphoserine modification is found at Ser-973. Position 978 is a phosphotyrosine; by INSR (Tyr-978). Residues 1013–1022 (PYPPLPPRPS) are compositionally biased toward pro residues. The YXXM motif 7 motif lies at 1072–1075 (YTEM). Position 1082 is a phosphothreonine (Thr-1082). Over residues 1083–1093 (PPQPIAAPPKP) the composition is skewed to pro residues. Ser-1100 carries the post-translational modification Phosphoserine. Ser-1109 carries the phosphoserine; by PLK1 modification. The tract at residues 1121 to 1296 (LQASQPPDPH…TRSLGGLISA (176 aa)) is disordered. Over residues 1150–1165 (ETFSSTTTVTPVSPSF) the composition is skewed to low complexity. A Phosphothreonine modification is found at Thr-1159. A phosphoserine mark is found at Ser-1162, Ser-1174, Ser-1176, and Ser-1186. Residues 1174–1183 (SASVENVSLR) show a composition bias toward polar residues. Gly residues predominate over residues 1188–1198 (GGVGVGPGGGD). Ser-1203 carries the phosphoserine modification. Residues 1224–1236 (QPGGLVGCPGSGG) are compositionally biased toward gly residues. The residue at position 1253 (Tyr-1253) is a Phosphotyrosine; by INSR. Positions 1263-1277 (GLPPQPQPPPPPLPQ) are enriched in pro residues. A Glycyl lysine isopeptide (Lys-Gly) (interchain with G-Cter in ubiquitin) cross-link involves residue Lys-1331.

In terms of assembly, interacts with PHIP. Interacts with SH2B1; this interaction enhances leptin-induced activation of the PI3-kinase pathway. Interacts with GRB2. Interacts with PIK3R1. Interacts with DVL2; this interaction promotes the Wnt/beta-catenin signaling pathway. In terms of processing, phosphorylation fluctuates in a cell-cycle dependent manner with hyperphosphorylation during mitosis. Phosphorylated at Ser-560 and Ser-1109 by PLK1; these phosphorylations prevent the activation of the PI3K pathway upon growth factor stimulation by inhibiting the binding between IRS2 and the PI3K pathway components and increasing the level of IRS2 protein degradation. In addition, they prevent premature mitotic exit. Monoubiquitinated by NEDD4; leading to enhanced IGF1 signaling. During cell cycle, ubiquitination and proteasomal degradation are controlled by FZR1.

It is found in the cytoplasm. It localises to the cytosol. In terms of biological role, signaling adapter protein that participates in the signal transduction from two prominent receptor tyrosine kinases, insulin receptor/INSR and insulin-like growth factor I receptor/IGF1R. Plays therefore an important role in development, growth, glucose homeostasis as well as lipid metabolism. Upon phosphorylation by the insulin receptor, functions as a signaling scaffold that propagates insulin action through binding to SH2 domain-containing proteins including the p85 regulatory subunit of PI3K, NCK1, NCK2, GRB2 or SHP2. Recruitment of GRB2 leads to the activation of the guanine nucleotide exchange factor SOS1 which in turn triggers the Ras/Raf/MEK/MAPK signaling cascade. Activation of the PI3K/AKT pathway is responsible for most of insulin metabolic effects in the cell, and the Ras/Raf/MEK/MAPK is involved in the regulation of gene expression and in cooperation with the PI3K pathway regulates cell growth and differentiation. Acts a positive regulator of the Wnt/beta-catenin signaling pathway through suppression of DVL2 autophagy-mediated degradation leading to cell proliferation. Plays a role in cell cycle progression by promoting a robust spindle assembly checkpoint (SAC) during M-phase. In macrophages, IL4-induced tyrosine phosphorylation of IRS2 leads to the recruitment and activation of phosphoinositide 3-kinase (PI3K). This Homo sapiens (Human) protein is Insulin receptor substrate 2 (IRS2).